The following is a 419-amino-acid chain: Ribosome biogenesis protein WDR12 homolog (419 aa).

A ubiquitin-like (UBL) domain region spans residues Val10 to Glu91. WD repeat units follow at residues Leu103–Pro141, Gly142–Glu184, Gly191–Gly230, Gly249–Glu287, Ser289–Val328, Gly334–Tyr374, and Gly378–Met416.

The protein belongs to the WD repeat WDR12/YTM1 family.

The protein resides in the nucleus. Its subcellular location is the nucleolus. It localises to the nucleoplasm. Functionally, required for maturation of ribosomal RNAs and formation of the large ribosomal subunit. The polypeptide is Ribosome biogenesis protein WDR12 homolog (Drosophila pseudoobscura pseudoobscura (Fruit fly)).